We begin with the raw amino-acid sequence, 208 residues long: Octanoyltransferase (208 aa).

A BPL/LPL catalytic domain is found at 31–208 (GSEREMVWLL…LKKEFYKVFA (178 aa)). Substrate-binding positions include 70-77 (RGGKYSYH), 142-144 (AFG), and 155-157 (GVA). The active-site Acyl-thioester intermediate is Cys173.

Belongs to the LipB family.

Its subcellular location is the cytoplasm. It carries out the reaction octanoyl-[ACP] + L-lysyl-[protein] = N(6)-octanoyl-L-lysyl-[protein] + holo-[ACP] + H(+). It functions in the pathway protein modification; protein lipoylation via endogenous pathway; protein N(6)-(lipoyl)lysine from octanoyl-[acyl-carrier-protein]: step 1/2. Its function is as follows. Catalyzes the transfer of endogenously produced octanoic acid from octanoyl-acyl-carrier-protein onto the lipoyl domains of lipoate-dependent enzymes. Lipoyl-ACP can also act as a substrate although octanoyl-ACP is likely to be the physiological substrate. In Anaplasma phagocytophilum (strain HZ), this protein is Octanoyltransferase.